A 56-amino-acid polypeptide reads, in one-letter code: MAAPKKRTSKSRKNMRKSTWKRQAATQAKKALSLAKSIATGKSTIRGVQSNLSDES.

Residues 1 to 20 (MAAPKKRTSKSRKNMRKSTW) are compositionally biased toward basic residues. A disordered region spans residues 1–28 (MAAPKKRTSKSRKNMRKSTWKRQAATQA).

This sequence belongs to the bacterial ribosomal protein bL32 family.

The protein resides in the plastid. The protein localises to the chloroplast. In Mesostigma viride (Green alga), this protein is Large ribosomal subunit protein bL32c (rpl32).